The chain runs to 72 residues: uncharacterized protein (72 aa).

This is an uncharacterized protein from Haemophilus influenzae (strain ATCC 51907 / DSM 11121 / KW20 / Rd).